The following is a 464-amino-acid chain: Cysteine--tRNA ligase (464 aa).

C27 lines the Zn(2+) pocket. The short motif at 29–39 (PTVYDDAHLGH) is the 'HIGH' region element. Positions 203, 234, and 238 each coordinate Zn(2+). The 'KMSKS' region motif lies at 266–270 (KMSKS). K269 provides a ligand contact to ATP.

Belongs to the class-I aminoacyl-tRNA synthetase family. Monomer. It depends on Zn(2+) as a cofactor.

It localises to the cytoplasm. The catalysed reaction is tRNA(Cys) + L-cysteine + ATP = L-cysteinyl-tRNA(Cys) + AMP + diphosphate. The protein is Cysteine--tRNA ligase of Campylobacter concisus (strain 13826).